Here is a 440-residue protein sequence, read N- to C-terminus: Transposon Ty1-DR3 Gag polyprotein (440 aa).

3 stretches are compositionally biased toward polar residues: residues 1–10, 48–60, and 127–152; these read MESQQLSNYP, TKAN…TPAS, and QSQF…GNTF. 3 disordered regions span residues 1-93, 126-173, and 352-440; these read MESQ…MMTQ, PQSQ…RPPP, and GSRN…PETY. Positions 153–165 are enriched in low complexity; the sequence is TDSSSADSDMTST. An RNA-binding region spans residues 299 to 401; that stretch reads NNGIHINNKV…NSKSKTARAH (103 aa). Polar residues predominate over residues 402–428; sequence NVSTSINSPSTDNDSISKSTTEPIQLN. A Phosphoserine modification is found at Ser-416. Residues 429-440 show a composition bias toward basic and acidic residues; it reads NKHDLHLRPETY.

As to quaternary structure, homotrimer.

It is found in the cytoplasm. Functionally, capsid protein (CA) is the structural component of the virus-like particle (VLP), forming the shell that encapsulates the retrotransposons dimeric RNA genome. The particles are assembled from trimer-clustered units and there are holes in the capsid shells that allow for the diffusion of macromolecules. CA also has nucleocapsid-like chaperone activity, promoting primer tRNA(i)-Met annealing to the multipartite primer-binding site (PBS), dimerization of Ty1 RNA and initiation of reverse transcription. This chain is Transposon Ty1-DR3 Gag polyprotein (TY1A-DR3), found in Saccharomyces cerevisiae (strain ATCC 204508 / S288c) (Baker's yeast).